We begin with the raw amino-acid sequence, 509 residues long: Lysine--tRNA ligase (509 aa).

The Mg(2+) site is built by glutamate 395 and glutamate 402.

This sequence belongs to the class-II aminoacyl-tRNA synthetase family. Homodimer. It depends on Mg(2+) as a cofactor.

It is found in the cytoplasm. The catalysed reaction is tRNA(Lys) + L-lysine + ATP = L-lysyl-tRNA(Lys) + AMP + diphosphate. In Fervidobacterium nodosum (strain ATCC 35602 / DSM 5306 / Rt17-B1), this protein is Lysine--tRNA ligase.